The primary structure comprises 361 residues: Biotin synthase (361 aa).

Residues 47 to 278 enclose the Radical SAM core domain; sequence VHGDEVALCG…AAHIFVMGGR (232 aa). 3 residues coordinate [4Fe-4S] cluster: Cys-65, Cys-69, and Cys-72. [2Fe-2S] cluster is bound by residues Ser-110, Cys-143, and Cys-203.

Belongs to the radical SAM superfamily. Biotin synthase family. As to quaternary structure, homodimer. The cofactor is [4Fe-4S] cluster. It depends on [2Fe-2S] cluster as a cofactor.

The catalysed reaction is (4R,5S)-dethiobiotin + (sulfur carrier)-SH + 2 reduced [2Fe-2S]-[ferredoxin] + 2 S-adenosyl-L-methionine = (sulfur carrier)-H + biotin + 2 5'-deoxyadenosine + 2 L-methionine + 2 oxidized [2Fe-2S]-[ferredoxin]. Its pathway is cofactor biosynthesis; biotin biosynthesis; biotin from 7,8-diaminononanoate: step 2/2. Functionally, catalyzes the conversion of dethiobiotin (DTB) to biotin by the insertion of a sulfur atom into dethiobiotin via a radical-based mechanism. This chain is Biotin synthase, found in Anaeromyxobacter dehalogenans (strain 2CP-C).